Here is a 68-residue protein sequence, read N- to C-terminus: DNA-directed RNA polymerase subunit Rpo10 (68 aa).

4 residues coordinate Zn(2+): C7, C10, C44, and C45.

This sequence belongs to the archaeal Rpo10/eukaryotic RPB10 RNA polymerase subunit family. In terms of assembly, part of the RNA polymerase complex. It depends on Zn(2+) as a cofactor.

It is found in the cytoplasm. The catalysed reaction is RNA(n) + a ribonucleoside 5'-triphosphate = RNA(n+1) + diphosphate. In terms of biological role, DNA-dependent RNA polymerase (RNAP) catalyzes the transcription of DNA into RNA using the four ribonucleoside triphosphates as substrates. In Methanococcus maripaludis (strain C6 / ATCC BAA-1332), this protein is DNA-directed RNA polymerase subunit Rpo10.